Here is a 397-residue protein sequence, read N- to C-terminus: Dimethyladenosine transferase 2, mitochondrial (397 aa).

The transit peptide at 1-44 (MRGLAMRLPPRLALSVLAGRGPSCILGSGAATRKDWQERNRRSF) directs the protein to the mitochondrion. S-adenosyl-L-methionine-binding residues include Ile-75, Glu-124, and Asp-150. Residues 329-330 (KR) form a DNA-binding region.

This sequence belongs to the class I-like SAM-binding methyltransferase superfamily. rRNA adenine N(6)-methyltransferase family. KsgA subfamily. Homodimer. Component of the mitochondrial transcription initiation complex, composed at least of TFB2M, TFAM and POLRMT. In this complex TFAM recruits POLRMT to the promoter whereas TFB2M induces structural changes in POLRMT to enable promoter opening and trapping of the DNA non-template strand. Interacts with mitochondrial RNA polymerase POLRMT. Interacts with TFAM.

The protein localises to the mitochondrion. The catalysed reaction is adenosine in rRNA + S-adenosyl-L-methionine = N(6)-methyladenosine in rRNA + S-adenosyl-L-homocysteine + H(+). S-adenosyl-L-methionine-dependent rRNA methyltransferase which may methylate two specific adjacent adenosines in the loop of a conserved hairpin near the 3'-end of 12S mitochondrial rRNA. Component of the mitochondrial transcription initiation complex, composed at least of TFB2M, TFAM and POLRMT that is required for basal transcription of mitochondrial DNA. In this complex TFAM recruits POLRMT to a specific promoter whereas TFB2M induces structural changes in POLRMT to enable promoter opening and trapping of the DNA non-template strand. Stimulates transcription independently of the methyltransferase activity. The protein is Dimethyladenosine transferase 2, mitochondrial of Rattus norvegicus (Rat).